Consider the following 1902-residue polypeptide: Plexin-B3 (1902 aa).

The signal sequence occupies residues 1–36 (MLTDFLQAPVMAPWSPFSLHLLLLFLPLLPLTRVHR). Residues 37–461 (FSVPNTSFNH…TAQQVDRILV (425 aa)) enclose the Sema domain. At 37–1245 (FSVPNTSFNH…MMSTFPVEAQ (1209 aa)) the chain is on the extracellular side. The N-linked (GlcNAc...) asparagine glycan is linked to Asn41. 2 cysteine pairs are disulfide-bonded: Cys88/Cys97 and Cys122/Cys130. Residue Asn221 is glycosylated (N-linked (GlcNAc...) asparagine). Disulfide bonds link Cys257/Cys360, Cys273/Cys305, and Cys323/Cys347. The disordered stretch occupies residues 353-372 (DSPESYPCGDEHTPSPIAGR). Asn416 and Asn469 each carry an N-linked (GlcNAc...) asparagine glycan. One can recognise a PSI 1 domain in the interval 463-515 (ACPQFPNCTTCLQARDPLCGWCILQGRCTRRGECGRAAQPNHWLWSYEDNHCP). 5 cysteine pairs are disulfide-bonded: Cys464–Cys481, Cys470–Cys514, Cys473–Cys490, Cys484–Cys496, and Cys551–Cys569. PSI domains follow at residues 609–671 (DCSA…EACP) and 776–822 (DCAM…QLCP). N-linked (GlcNAc...) asparagine glycosylation is found at Asn791, Asn889, Asn910, Asn946, Asn1090, and Asn1207. IPT/TIG domains are found at residues 823–914 (IPSI…FTYQ), 915–1001 (DPVL…FRYT), 1003–1134 (NPQL…FLYQ), and 1154–1221 (KPGH…QMGN). A helical membrane pass occupies residues 1246–1266 (LGLGMGAAVLIAAVLLLTLMY). Topologically, residues 1267–1902 (RHKSKKALRD…ALVEYKVTDL (636 aa)) are cytoplasmic.

It belongs to the plexin family. Binds MET and MST1R. Interacts with RIT2/RIN. May form homodimers (via Sema domain). Interacts (via cytoplasmic domain) with FSCN1, ARHGDIA and RAC1. As to expression, expressed in brain (at protein level). In cerebellum, strongest expression detected in Purkinje and granular cells. Detected at very low levels in several fetal tissues, including dorsal root ganglia (DRG), heart, lung, optic bulb, brain and liver.

It is found in the cell membrane. Its function is as follows. Receptor for SEMA5A that plays a role in axon guidance, invasive growth and cell migration. Stimulates neurite outgrowth and mediates Ca(2+)/Mg(2+)-dependent cell aggregation. In glioma cells, SEMA5A stimulation of PLXNB3 results in the disassembly of F-actin stress fibers, disruption of focal adhesions and cellular collapse as well as inhibition of cell migration and invasion through ARHGDIA-mediated inactivation of RAC1. Seem to be non-essential for normal development and function of the central nervous system. This is Plexin-B3 (Plxnb3) from Mus musculus (Mouse).